Here is a 546-residue protein sequence, read N- to C-terminus: Cyclic GMP-AMP synthase-like receptor (546 aa).

The span at 1–10 (MPVGSRQNRV) shows a compositional bias: polar residues. 2 disordered regions span residues 1–116 (MPVG…CASR) and 134–186 (AKQE…RLTN). Residues 35–45 (YTERKERKDVQ) show a composition bias toward basic and acidic residues. A compositionally biased stretch (low complexity) spans 69–80 (TSRTLRQTSQSR). Composition is skewed to basic and acidic residues over residues 82–95 (EVLERNESGSDCKK) and 145–174 (KEGYADEEQKIENSTQERKVVNTSMEDKAT). Residues 175-186 (SHSTKGSFRLTN) show a composition bias toward polar residues. Residues serine 243 and 255–257 (EFD) contribute to the ATP site. Mg(2+) contacts are provided by glutamate 255, aspartate 257, and aspartate 374. GTP-binding positions include aspartate 374 and 428 to 435 (RTSFSLAE). Residues 432–435 (SLAE), lysine 455, and 470–474 (SYHLK) each bind ATP.

It belongs to the mab-21 family. It depends on Mg(2+) as a cofactor. The cofactor is Mn(2+).

The catalysed reaction is GTP + ATP = 2',3'-cGAMP + 2 diphosphate. The enzyme catalyses GTP + ATP = pppGp(2'-5')A + diphosphate. It catalyses the reaction pppGp(2'-5')A = 2',3'-cGAMP + diphosphate. Functionally, nucleotidyltransferase that catalyzes the formation of cyclic GMP-AMP (2',3'-cGAMP) from ATP and GTP and plays a key role in innate immunity. Directly binds some unknown ligand, activating the nucleotidyltransferase activity, leading to synthesis of 2',3'-cGAMP, a second messenger that binds to and activates Sting, thereby triggering the immune response via activation of the NF-kappa-B transcription factor. In Exaiptasia diaphana (Tropical sea anemone), this protein is Cyclic GMP-AMP synthase-like receptor.